The following is a 152-amino-acid chain: Deoxyuridine 5'-triphosphate nucleotidohydrolase (152 aa).

Substrate-binding positions include 71–73, Asn-84, 88–90, and Met-98; these read RSG and LID.

It belongs to the dUTPase family. Requires Mg(2+) as cofactor.

The catalysed reaction is dUTP + H2O = dUMP + diphosphate + H(+). The protein operates within pyrimidine metabolism; dUMP biosynthesis; dUMP from dCTP (dUTP route): step 2/2. Functionally, this enzyme is involved in nucleotide metabolism: it produces dUMP, the immediate precursor of thymidine nucleotides and it decreases the intracellular concentration of dUTP so that uracil cannot be incorporated into DNA. This chain is Deoxyuridine 5'-triphosphate nucleotidohydrolase, found in Haemophilus ducreyi (strain 35000HP / ATCC 700724).